The sequence spans 350 residues: Dihydroorotase (350 aa).

Residues His-17 and His-19 each coordinate Zn(2+). Substrate-binding positions include 19-21 (HLR) and Asn-45. Lys-103, His-140, and His-178 together coordinate Zn(2+). Lys-103 is modified (N6-carboxylysine). Substrate is bound at residue His-140. Leu-224 is a substrate binding site. Zn(2+) is bound at residue Asp-252. Asp-252 is a catalytic residue. Substrate contacts are provided by His-256 and Ala-268.

The protein belongs to the metallo-dependent hydrolases superfamily. DHOase family. Class II DHOase subfamily. Homodimer. Requires Zn(2+) as cofactor.

It catalyses the reaction (S)-dihydroorotate + H2O = N-carbamoyl-L-aspartate + H(+). The protein operates within pyrimidine metabolism; UMP biosynthesis via de novo pathway; (S)-dihydroorotate from bicarbonate: step 3/3. Catalyzes the reversible cyclization of carbamoyl aspartate to dihydroorotate. This Buchnera aphidicola subsp. Acyrthosiphon pisum (strain 5A) protein is Dihydroorotase.